A 314-amino-acid polypeptide reads, in one-letter code: Putative lipoprotein LppW (314 aa).

Residues 1 to 22 form the signal peptide; that stretch reads MRARPLTLLTALAAVTLVVVAG. Cys-23 carries N-palmitoyl cysteine lipidation. Cys-23 carries S-diacylglycerol cysteine lipidation.

Its subcellular location is the cell membrane. In Mycobacterium bovis (strain ATCC BAA-935 / AF2122/97), this protein is Putative lipoprotein LppW (lppW).